The sequence spans 136 residues: Histone H3 (136 aa).

Residues 1–42 (MARTKQTARKSTGGKAPRKQLATKAAAKSAPATGGVKKPHRY) form a disordered region. N6-methylated lysine is present on K5. K10 bears the N6-acetyllysine; alternate mark. An N6-methylated lysine; alternate modification is found at K10. A Phosphoserine modification is found at S11. Residues K15 and K24 each carry the N6-acetyllysine modification. Positions 22–33 (ATKAAAKSAPAT) are enriched in low complexity. N6-methylated lysine is present on residues K28, K37, and K80.

The protein belongs to the histone H3 family. In terms of assembly, the nucleosome is a histone octamer containing two molecules each of H2A, H2B, H3 and H4 assembled in one H3-H4 heterotetramer and two H2A-H2B heterodimers. The octamer wraps approximately 147 bp of DNA. Post-translationally, acetylation is generally linked to gene activation. Methylation at Lys-5 is linked to gene activation. Methylation at Lys-10 is linked to gene repression.

The protein localises to the nucleus. Its subcellular location is the chromosome. Core component of nucleosome. Nucleosomes wrap and compact DNA into chromatin, limiting DNA accessibility to the cellular machineries which require DNA as a template. Histones thereby play a central role in transcription regulation, DNA repair, DNA replication and chromosomal stability. DNA accessibility is regulated via a complex set of post-translational modifications of histones, also called histone code, and nucleosome remodeling. The chain is Histone H3 from Acropora formosa (Staghorn coral).